The following is a 435-amino-acid chain: N-lysine methyltransferase SMYD2-A (435 aa).

Residues 7–241 (EGTERFLSPG…PEEEIFNSYI (235 aa)) form the SET domain. 17–19 (KGR) is a binding site for S-adenosyl-L-methionine. Zn(2+) is bound by residues cysteine 52, cysteine 55, cysteine 65, cysteine 68, cysteine 74, cysteine 78, histidine 86, and cysteine 90. An MYND-type zinc finger spans residues 52-90 (CECCFTRKEGLSKCGKCKQAYYCNVECQRGDWPMHKLEC). Residues histidine 137, 206–207 (NH), and 258–260 (YFF) each bind S-adenosyl-L-methionine.

Belongs to the class V-like SAM-binding methyltransferase superfamily.

The protein resides in the cytoplasm. It is found in the cytosol. The protein localises to the nucleus. It carries out the reaction L-lysyl(4)-[histone H3] + 3 S-adenosyl-L-methionine = N(6),N(6),N(6)-trimethyl-L-lysyl(4)-[histone H3] + 3 S-adenosyl-L-homocysteine + 3 H(+). The enzyme catalyses L-lysyl-[protein] + S-adenosyl-L-methionine = N(6)-methyl-L-lysyl-[protein] + S-adenosyl-L-homocysteine + H(+). Its function is as follows. Protein-lysine N-methyltransferase that methylates both histones and non-histone proteins, including p53/TP53 and RB1. Specifically trimethylates histone H3 'Lys-4' (H3K4me3) in vivo. The activity requires interaction with HSP90alpha. Shows even higher methyltransferase activity on p53/TP53. Monomethylates 'Lys-370' of p53/TP53, leading to decreased DNA-binding activity and subsequent transcriptional regulation activity of p53/TP53. Monomethylates RB1 at 'Lys-860'. The polypeptide is N-lysine methyltransferase SMYD2-A (smyd2a) (Danio rerio (Zebrafish)).